The sequence spans 459 residues: tRNA(Ile)-lysidine synthase (459 aa).

38-43 lines the ATP pocket; the sequence is SGGMDS.

The protein belongs to the tRNA(Ile)-lysidine synthase family.

The protein resides in the cytoplasm. It carries out the reaction cytidine(34) in tRNA(Ile2) + L-lysine + ATP = lysidine(34) in tRNA(Ile2) + AMP + diphosphate + H(+). Its function is as follows. Ligates lysine onto the cytidine present at position 34 of the AUA codon-specific tRNA(Ile) that contains the anticodon CAU, in an ATP-dependent manner. Cytidine is converted to lysidine, thus changing the amino acid specificity of the tRNA from methionine to isoleucine. This is tRNA(Ile)-lysidine synthase from Acinetobacter baylyi (strain ATCC 33305 / BD413 / ADP1).